Consider the following 545-residue polypeptide: CTP synthase (545 aa).

The segment at 1–266 (MTTNYIFVTG…DDYICKRFSL (266 aa)) is amidoligase domain. S14 serves as a coordination point for CTP. S14 contacts UTP. ATP contacts are provided by residues 15–20 (SLGKGI) and D72. Mg(2+) contacts are provided by D72 and E140. Residues 147-149 (DIE), 187-192 (KTKPTQ), and K223 each bind CTP. UTP contacts are provided by residues 187–192 (KTKPTQ) and K223. 239 to 241 (KDV) serves as a coordination point for ATP. Residues 291-542 (TIGMVGKYIE…VKAASEYQKR (252 aa)) enclose the Glutamine amidotransferase type-1 domain. G352 is a binding site for L-glutamine. Catalysis depends on C379, which acts as the Nucleophile; for glutamine hydrolysis. Residues 380 to 383 (LGMQ), E403, and R470 each bind L-glutamine. Residues H515 and E517 contribute to the active site.

This sequence belongs to the CTP synthase family. As to quaternary structure, homotetramer.

The catalysed reaction is UTP + L-glutamine + ATP + H2O = CTP + L-glutamate + ADP + phosphate + 2 H(+). It catalyses the reaction L-glutamine + H2O = L-glutamate + NH4(+). The enzyme catalyses UTP + NH4(+) + ATP = CTP + ADP + phosphate + 2 H(+). It participates in pyrimidine metabolism; CTP biosynthesis via de novo pathway; CTP from UDP: step 2/2. Allosterically activated by GTP, when glutamine is the substrate; GTP has no effect on the reaction when ammonia is the substrate. The allosteric effector GTP functions by stabilizing the protein conformation that binds the tetrahedral intermediate(s) formed during glutamine hydrolysis. Inhibited by the product CTP, via allosteric rather than competitive inhibition. Catalyzes the ATP-dependent amination of UTP to CTP with either L-glutamine or ammonia as the source of nitrogen. Regulates intracellular CTP levels through interactions with the four ribonucleotide triphosphates. The sequence is that of CTP synthase from Enterobacter sp. (strain 638).